The chain runs to 100 residues: Large ribosomal subunit protein uL23 (100 aa).

It belongs to the universal ribosomal protein uL23 family. As to quaternary structure, part of the 50S ribosomal subunit. Contacts protein L29, and trigger factor when it is bound to the ribosome.

One of the early assembly proteins it binds 23S rRNA. One of the proteins that surrounds the polypeptide exit tunnel on the outside of the ribosome. Forms the main docking site for trigger factor binding to the ribosome. The chain is Large ribosomal subunit protein uL23 from Prochlorococcus marinus (strain MIT 9301).